A 102-amino-acid polypeptide reads, in one-letter code: RNA-binding protein Hfq (102 aa).

One can recognise a Sm domain in the interval 9–68; it reads DPFLNALRRERVPVSIYLVNGIKLQGQIESFDQFVILLKNTVSQMVYKHAISTVVPSRPV. Positions 64-102 are disordered; the sequence is PSRPVSHHSNTPSGGTSNYHHGNNPSAPQQPQQESDDAE. Polar residues predominate over residues 70–96; the sequence is HHSNTPSGGTSNYHHGNNPSAPQQPQQ.

The protein belongs to the Hfq family. Homohexamer.

RNA chaperone that binds small regulatory RNA (sRNAs) and mRNAs to facilitate mRNA translational regulation in response to envelope stress, environmental stress and changes in metabolite concentrations. Also binds with high specificity to tRNAs. The protein is RNA-binding protein Hfq of Serratia proteamaculans (strain 568).